Consider the following 155-residue polypeptide: Putative pre-16S rRNA nuclease (155 aa).

The disordered stretch occupies residues 136–155 (DAERATSRPPGHPVEPRIGP).

The protein belongs to the YqgF nuclease family.

The protein resides in the cytoplasm. In terms of biological role, could be a nuclease involved in processing of the 5'-end of pre-16S rRNA. The polypeptide is Putative pre-16S rRNA nuclease (Leifsonia xyli subsp. xyli (strain CTCB07)).